We begin with the raw amino-acid sequence, 718 residues long: Ophiobolin F synthase oblA (718 aa).

The interval 1–320 (MACKYSTLID…RYNGPTKFNE (320 aa)) is (7Z)-ophiobola-7,19-dien-3-ol synthase. Mg(2+)-binding residues include D93 and D97. D93 contacts substrate. A DDXXD 1 motif is present at residues 93–97 (DDVID). Residues 180 to 183 (RALD), N224, 228 to 232 (SFEKE), and 311 to 312 (RY) each bind substrate. The short motif at 224 to 232 (NDLFSFEKE) is the NSE/DTE element. The tract at residues 321–718 (LQLLRSEHGL…LRVMLELLKV (398 aa)) is geranylfarnesyl diphosphate synthase. The tract at residues 346 to 391 (LVEGDCHESKPNELKRKRNGVSVDDEMRTNGTNGAKKPAHVSQPST) is disordered. A compositionally biased stretch (basic and acidic residues) spans 349–359 (GDCHESKPNEL). K429, R432, and H461 together coordinate isopentenyl diphosphate. Residues D468 and D472 each coordinate Mg(2+). The DDXXD 2 signature appears at 468-472 (DDLED). R477 is a dimethylallyl diphosphate binding site. R478 lines the isopentenyl diphosphate pocket. Dimethylallyl diphosphate is bound by residues K555, T556, Q594, N601, K611, and K621.

This sequence in the N-terminal section; belongs to the terpene synthase family. In the C-terminal section; belongs to the FPP/GGPP synthase family. The cofactor is Mg(2+).

It catalyses the reaction isopentenyl diphosphate + (2E,6E)-farnesyl diphosphate = (2E,6E,10E)-geranylgeranyl diphosphate + diphosphate. The enzyme catalyses isopentenyl diphosphate + (2E,6E,10E)-geranylgeranyl diphosphate = (2E,6E,10E,14E)-geranylfarnesyl diphosphate + diphosphate. It carries out the reaction (2E,6E,10E,14E)-geranylfarnesyl diphosphate + H2O = ophiobolin F + diphosphate. The protein operates within secondary metabolite biosynthesis; terpenoid biosynthesis. Functionally, bifunctional sesterterpene synthase; part of the gene cluster that mediates the biosynthesis of the sesterterpenes ophiobolins, fungal phytotoxins with potential anti-cancer activities. The first step of the pathway is performed by the sesterterpene synthase oblA that possesses both prenyl transferase and terpene cyclase activity, converting isopentenyl diphosphate and dimethylallyl diphosphate into geranylfarnesyl diphosphate (GFPP) and further converting GFPP into ophiobolin F, respectively. Other sesterterpenoids (C(25) terpenoids) are found as minor products of oblA. It is expected that ophiobolin F is then oxidized to ophiobolin A via ophiobolin C and ophiobolin B intermediates by the combined action of the cytochrome P450 monooxygenase oblB and the FAD-dependent oxidoreductase oblC. Although oblB catalyzes multistep oxygenations at C5 and C21/C7 in a relatively efficient manner, it is unable to convert ophiobolin F to ophiobolin C and produces instead several unexpected derivatives. The polypeptide is Ophiobolin F synthase oblA (Aspergillus clavatus (strain ATCC 1007 / CBS 513.65 / DSM 816 / NCTC 3887 / NRRL 1 / QM 1276 / 107)).